A 293-amino-acid polypeptide reads, in one-letter code: ATP phosphoribosyltransferase (293 aa).

This sequence belongs to the ATP phosphoribosyltransferase family. Long subfamily. It depends on Mg(2+) as a cofactor.

It is found in the cytoplasm. The enzyme catalyses 1-(5-phospho-beta-D-ribosyl)-ATP + diphosphate = 5-phospho-alpha-D-ribose 1-diphosphate + ATP. Its pathway is amino-acid biosynthesis; L-histidine biosynthesis; L-histidine from 5-phospho-alpha-D-ribose 1-diphosphate: step 1/9. Feedback inhibited by histidine. Catalyzes the condensation of ATP and 5-phosphoribose 1-diphosphate to form N'-(5'-phosphoribosyl)-ATP (PR-ATP). Has a crucial role in the pathway because the rate of histidine biosynthesis seems to be controlled primarily by regulation of HisG enzymatic activity. The polypeptide is ATP phosphoribosyltransferase (Nitratidesulfovibrio vulgaris (strain DP4) (Desulfovibrio vulgaris)).